The sequence spans 1007 residues: Integrator complex subunit 8 (1007 aa).

Positions 19 to 24 (WFEFLL) match the WFEF motif motif. Positions 56–78 (TAQESVGTPGSDLQNLNQTPSNS) are enriched in polar residues. The disordered stretch occupies residues 56-112 (TAQESVGTPGSDLQNLNQTPSNSGPIPGVVGGAPAPTTPTASGGVGMPHSPQRPAEK). The segment covering 79–97 (GPIPGVVGGAPAPTTPTAS) has biased composition (low complexity).

This sequence belongs to the Integrator subunit 8 family. In terms of assembly, belongs to the multiprotein complex Integrator, at least composed of IntS1, IntS2, IntS3, IntS4, omd/IntS5, IntS6, defl/IntS7, IntS8, IntS9, IntS10, IntS11, IntS12, asun/IntS13, IntS14 and IntS15. The core complex associates with protein phosphatase 2A subunits mts/PP2A and Pp2A-29B, to form the Integrator-PP2A (INTAC) complex.

It localises to the nucleus. The protein resides in the chromosome. In terms of biological role, component of the integrator complex, a multiprotein complex that terminates RNA polymerase II (Pol II) transcription in the promoter-proximal region of genes. The integrator complex provides a quality checkpoint during transcription elongation by driving premature transcription termination of transcripts that are unfavorably configured for transcriptional elongation: the complex terminates transcription by (1) catalyzing dephosphorylation of the C-terminal domain (CTD) of Pol II subunit Polr2A/Rbp1 and Spt5, and (2) degrading the exiting nascent RNA transcript via endonuclease activity. The integrator complex is also involved in the 3'-end processing of the U7 snRNA, and also the spliceosomal snRNAs U1, U2, U4 and U5. Within the integrator complex, INTS8 is required for the recruitment of protein phosphatase 2A (PP2A) to transcription pause-release checkpoint. This is Integrator complex subunit 8 from Drosophila melanogaster (Fruit fly).